A 374-amino-acid chain; its full sequence is Glutamate 5-kinase (374 aa).

Residue Lys16 participates in ATP binding. Substrate-binding residues include Ser56, Asp143, and Asn155. Thr175–Asp176 contacts ATP. A PUA domain is found at Lys282–Val360.

The protein belongs to the glutamate 5-kinase family.

It localises to the cytoplasm. It carries out the reaction L-glutamate + ATP = L-glutamyl 5-phosphate + ADP. The protein operates within amino-acid biosynthesis; L-proline biosynthesis; L-glutamate 5-semialdehyde from L-glutamate: step 1/2. In terms of biological role, catalyzes the transfer of a phosphate group to glutamate to form L-glutamate 5-phosphate. The sequence is that of Glutamate 5-kinase from Methylococcus capsulatus (strain ATCC 33009 / NCIMB 11132 / Bath).